We begin with the raw amino-acid sequence, 244 residues long: tRNA pseudouridine synthase A (244 aa).

Aspartate 52 (nucleophile) is an active-site residue. Tyrosine 111 contacts substrate.

It belongs to the tRNA pseudouridine synthase TruA family. Homodimer.

The catalysed reaction is uridine(38/39/40) in tRNA = pseudouridine(38/39/40) in tRNA. In terms of biological role, formation of pseudouridine at positions 38, 39 and 40 in the anticodon stem and loop of transfer RNAs. This Thermosipho melanesiensis (strain DSM 12029 / CIP 104789 / BI429) protein is tRNA pseudouridine synthase A.